A 354-amino-acid polypeptide reads, in one-letter code: Guanine nucleotide-binding protein alpha-3 subunit (354 aa).

G2 carries the N-myristoyl glycine lipid modification. C4 carries S-palmitoyl cysteine lipidation. A G-alpha domain is found at 33–354 (KECKILLLGS…TNALKDSGIL (322 aa)). Residues 36–49 (KILLLGSGESGKST) are G1 motif. GTP-binding positions include 41 to 48 (GSGESGKS), 177 to 183 (LRARSKT), 202 to 206 (DVGGQ), 271 to 274 (NKID), and A326. Positions 48 and 183 each coordinate Mg(2+). The tract at residues 175–183 (DVLRARSKT) is G2 motif. Positions 198–207 (IHLFDVGGQR) are G3 motif. The segment at 267–274 (ILFLNKID) is G4 motif. Residues 324–329 (TQATDT) form a G5 motif region.

Belongs to the G-alpha family. In terms of assembly, g proteins are composed of 3 units; alpha, beta and gamma. The alpha chain contains the guanine nucleotide binding site.

Guanine nucleotide-binding proteins (G proteins) are involved as modulators or transducers in various transmembrane signaling systems. This subunit is involved in cAMP regulation and morphogenesis. It is essential for dimorphic switching in haploid cells. This is Guanine nucleotide-binding protein alpha-3 subunit (FIL1) from Ustilago hordei (Barley covered smut fungus).